Here is a 186-residue protein sequence, read N- to C-terminus: UPF0200 protein PH1008 (186 aa).

7-14 contacts ATP; sequence GMPGSGKG.

Belongs to the UPF0200 family.

The sequence is that of UPF0200 protein PH1008 from Pyrococcus horikoshii (strain ATCC 700860 / DSM 12428 / JCM 9974 / NBRC 100139 / OT-3).